The chain runs to 229 residues: MDAKIKPIRGTNPAEGRPEFQPAELEPSEFLEVAVQPDQPRPSRAEAEAAVKTLLSYIGENTEREGLIDTPRRVVEAYDELFQGYHQCPKEVLERTFGETAGYDDFVLVRNISFTSHCEHHVMPFYGKAHIAYTPVERVVGLSKLARLVDIFARRLQTQEHLTAQIAAAIDEVLKPRGVAVLLEAEHTCMSVRGIAKKGATTFTSRYTGVFRDNPAEQARFMSMVRDRG.

A disordered region spans residues 1 to 26; it reads MDAKIKPIRGTNPAEGRPEFQPAELE. The Zn(2+) site is built by Cys-118, His-121, and Cys-189.

It belongs to the GTP cyclohydrolase I family. As to quaternary structure, toroid-shaped homodecamer, composed of two pentamers of five dimers.

It catalyses the reaction GTP + H2O = 7,8-dihydroneopterin 3'-triphosphate + formate + H(+). It functions in the pathway cofactor biosynthesis; 7,8-dihydroneopterin triphosphate biosynthesis; 7,8-dihydroneopterin triphosphate from GTP: step 1/1. The protein is GTP cyclohydrolase 1 of Rhodopseudomonas palustris (strain ATCC BAA-98 / CGA009).